A 144-amino-acid chain; its full sequence is Oleosin H2 (144 aa).

Ala2 is subject to N-acetylalanine. A run of 3 helical transmembrane segments spans residues 28 to 48, 53 to 73, and 75 to 95; these read VLAVVTLFPLGAVLLCLAGLI, IIGLAVATPLFVIFSPILVPA, and LTIALAVTGFLTSGAFGITAL. The Proline-knot signature appears at 61–72; that stretch reads PLFVIFSPILVP. Positions 124-144 are disordered; that stretch reads QETVGQKTREAGQRSQDVIRP.

Belongs to the oleosin family. Expressed in seeds (at protein level).

Its subcellular location is the lipid droplet. It is found in the membrane. May have a structural role to stabilize the lipid body during desiccation of the seed by preventing coalescence of the oil. Probably interacts with both lipid and phospholipid moieties of lipid bodies. May also provide recognition signals for specific lipase anchorage in lipolysis during seedling growth. This is Oleosin H2 from Sesamum indicum (Oriental sesame).